An 88-amino-acid polypeptide reads, in one-letter code: Small ribosomal subunit protein bS20 (88 aa).

Belongs to the bacterial ribosomal protein bS20 family.

Its function is as follows. Binds directly to 16S ribosomal RNA. The protein is Small ribosomal subunit protein bS20 of Aromatoleum aromaticum (strain DSM 19018 / LMG 30748 / EbN1) (Azoarcus sp. (strain EbN1)).